The following is a 463-amino-acid chain: uncharacterized protein (463 aa).

The 59-residue stretch at 9-67 (VLKKGQRFPLTIKRLGINGEGVGYFKRHVVFVPGALPGEEVVVEVTDVKPRFAEASIRK) folds into the TRAM domain. Positions 80, 86, 89, and 169 each coordinate [4Fe-4S] cluster. Positions 293, 322, 343, and 391 each coordinate S-adenosyl-L-methionine. C418 (nucleophile) is an active-site residue.

Belongs to the class I-like SAM-binding methyltransferase superfamily. RNA M5U methyltransferase family.

This is an uncharacterized protein from Halalkalibacterium halodurans (strain ATCC BAA-125 / DSM 18197 / FERM 7344 / JCM 9153 / C-125) (Bacillus halodurans).